Reading from the N-terminus, the 167-residue chain is Phosphopantetheine adenylyltransferase (167 aa).

Thr9 lines the substrate pocket. ATP contacts are provided by residues Thr9–Phe10 and His17. Substrate contacts are provided by Lys41, Leu73, and Arg87. ATP contacts are provided by residues Gly88–Arg90, Glu98, and Tyr123–Thr129.

Belongs to the bacterial CoaD family. In terms of assembly, homohexamer. The cofactor is Mg(2+).

The protein localises to the cytoplasm. The catalysed reaction is (R)-4'-phosphopantetheine + ATP + H(+) = 3'-dephospho-CoA + diphosphate. The protein operates within cofactor biosynthesis; coenzyme A biosynthesis; CoA from (R)-pantothenate: step 4/5. Reversibly transfers an adenylyl group from ATP to 4'-phosphopantetheine, yielding dephospho-CoA (dPCoA) and pyrophosphate. This is Phosphopantetheine adenylyltransferase from Ralstonia pickettii (strain 12J).